Reading from the N-terminus, the 539-residue chain is MLRKGICRLIHQVSESSKKPYFLTTPIFYVNAAPHLGHLYSLVLTDAIARFQNLKPDVSVISSTGTDEHGLKVQTVAQTEGVSPLQLCDRNSKRFADLAVAANTKFTHFIRTTNPKHQASVQEFWKTIQKAGMISFERHEGWYCVSDETFYPESAIQKVVDPATKQEKRVSMETGKEVQWSSEMNYHFLLSKFQSRLIEHYNKNPNFVQPSIFHTQVLEELKTGISDLSISRPKQRLSWGIPVPGNSQQTIYVWLDALINYISVIGYPWLNEKSSLSAGWPANMHVIGKDIIRFHCIYWPAFLMAAGLPLPEKILVHSHWTMNKVKMSKSLGNVVDPFWLIEKYGVDTIRYYLLKRGRLTSDSNFDIEELEKDEEHDLRRSLGVLLSRLQSKKLFISNEIQKQWHKKDDFTEYEDIVHELIELPVVCAQSIDGGCVYEVINLVQSVLRRVTKLFQLKEPWKLSDDSQEKIDTLMLVAHSLRISGILLQPIMPTKSTELLDQLGIPKNQRSLQNATNVFEPTEFTFHSGNNSHLFDKRTQ.

The 'HIGH' region signature appears at 28–38; that stretch reads FYVNAAPHLGH. The 'KMSKS' region motif lies at 326 to 330; it reads KMSKS. Lys-329 serves as a coordination point for ATP.

This sequence belongs to the class-I aminoacyl-tRNA synthetase family.

Its subcellular location is the mitochondrion matrix. The catalysed reaction is tRNA(Met) + L-methionine + ATP = L-methionyl-tRNA(Met) + AMP + diphosphate. This Schizosaccharomyces pombe (strain 972 / ATCC 24843) (Fission yeast) protein is Probable methionine--tRNA ligase, mitochondrial.